A 532-amino-acid chain; its full sequence is Cytochrome P450 12b1, mitochondrial (532 aa).

Cys-480 provides a ligand contact to heme.

This sequence belongs to the cytochrome P450 family. The cofactor is heme.

Its subcellular location is the mitochondrion. In terms of biological role, probably involved in steroid hormones biosynthesis. This Drosophila acanthoptera (Fruit fly) protein is Cytochrome P450 12b1, mitochondrial (Cyp12b1).